A 33-amino-acid polypeptide reads, in one-letter code: GLMSVLKKAGKHVAKNVAASLMDSLKCKITGGC.

Cys27 and Cys33 are disulfide-bonded.

In terms of tissue distribution, expressed by the skin glands.

The protein localises to the secreted. Has antibacterial activity. This chain is Brevinin-2LT, found in Rana latastei (Italian agile frog).